The primary structure comprises 240 residues: 1-(5-phosphoribosyl)-5-[(5-phosphoribosylamino)methylideneamino] imidazole-4-carboxamide isomerase (240 aa).

Asp-8 functions as the Proton acceptor in the catalytic mechanism. The active-site Proton donor is the Asp-129.

This sequence belongs to the HisA/HisF family.

The protein resides in the cytoplasm. The catalysed reaction is 1-(5-phospho-beta-D-ribosyl)-5-[(5-phospho-beta-D-ribosylamino)methylideneamino]imidazole-4-carboxamide = 5-[(5-phospho-1-deoxy-D-ribulos-1-ylimino)methylamino]-1-(5-phospho-beta-D-ribosyl)imidazole-4-carboxamide. The protein operates within amino-acid biosynthesis; L-histidine biosynthesis; L-histidine from 5-phospho-alpha-D-ribose 1-diphosphate: step 4/9. The protein is 1-(5-phosphoribosyl)-5-[(5-phosphoribosylamino)methylideneamino] imidazole-4-carboxamide isomerase of Clostridioides difficile (strain 630) (Peptoclostridium difficile).